Consider the following 280-residue polypeptide: MIEVRDLRFHYQEKERAVLDGVSMTLKDGEYVALIGANGCGKTTLVHHLNALMRPTSGVVSVDGLDTLDDRQVWEIRRRVGMVFQNPENQIVGMTIEEDIAFGPGNLGLPPAEIRRRVASSLELVGLESYGRRVPSALSGGEKRLVAIAGILAMEPRYIIFDEPTSYLDPASRQRVLALIAGLHKRGLGIIHITHNMDDILDVDRVLVMREGKIVRDDRPEIVLSQGDWLRQQGLGMPAATALLWRLKEMGVSVRTDILDFEDVCREIAAWKSHPVESVA.

One can recognise an ABC transporter domain in the interval 2 to 236; it reads IEVRDLRFHY…GDWLRQQGLG (235 aa). Position 36-43 (36-43) interacts with ATP; sequence GANGCGKT.

It belongs to the ABC transporter superfamily. Cobalt importer (TC 3.A.1.18.1) family. Forms an energy-coupling factor (ECF) transporter complex composed of an ATP-binding protein (A component, CbiO), a transmembrane protein (T component, CbiQ) and 2 possible substrate-capture proteins (S components, CbiM and CbiN) of unknown stoichimetry.

It is found in the cell inner membrane. It participates in cofactor biosynthesis; adenosylcobalamin biosynthesis. Its function is as follows. Part of the energy-coupling factor (ECF) transporter complex CbiMNOQ involved in cobalt import. Presumably responsible for energy coupling to the transport system. This is Cobalt import ATP-binding protein CbiO from Syntrophus aciditrophicus (strain SB).